Reading from the N-terminus, the 72-residue chain is MPKSDIHPTWFENTKVLCDGKPLCLIGSTKSELQIDMWLANHPFYTNSQVLIDSEGRVEKFMKKYRLDITEQ.

Belongs to the bacterial ribosomal protein bL31 family. Type A subfamily. In terms of assembly, part of the 50S ribosomal subunit.

The protein localises to the plastid. It is found in the chloroplast. Its function is as follows. Binds the 23S rRNA. The sequence is that of Large ribosomal subunit protein bL31c (rpl31) from Phaeodactylum tricornutum (strain CCAP 1055/1).